We begin with the raw amino-acid sequence, 334 residues long: GTP 3',8-cyclase (334 aa).

One can recognise a Radical SAM core domain in the interval 13–239 (RFQRKFYYLR…KARADNDGPA (227 aa)). Arg22 provides a ligand contact to GTP. Positions 29 and 33 each coordinate [4Fe-4S] cluster. Tyr35 lines the S-adenosyl-L-methionine pocket. Cys36 lines the [4Fe-4S] cluster pocket. A GTP-binding site is contributed by Arg73. S-adenosyl-L-methionine is bound at residue Gly77. Thr104 is a binding site for GTP. Ser128 provides a ligand contact to S-adenosyl-L-methionine. Lys165 lines the GTP pocket. Met199 lines the S-adenosyl-L-methionine pocket. The [4Fe-4S] cluster site is built by Cys262 and Cys265. 267–269 (RLR) is a binding site for GTP. Cys279 contributes to the [4Fe-4S] cluster binding site.

The protein belongs to the radical SAM superfamily. MoaA family. Monomer and homodimer. Requires [4Fe-4S] cluster as cofactor.

The enzyme catalyses GTP + AH2 + S-adenosyl-L-methionine = (8S)-3',8-cyclo-7,8-dihydroguanosine 5'-triphosphate + 5'-deoxyadenosine + L-methionine + A + H(+). The protein operates within cofactor biosynthesis; molybdopterin biosynthesis. Its function is as follows. Catalyzes the cyclization of GTP to (8S)-3',8-cyclo-7,8-dihydroguanosine 5'-triphosphate. The protein is GTP 3',8-cyclase of Vibrio cholerae serotype O1 (strain M66-2).